A 265-amino-acid chain; its full sequence is Palmitoyltransferase ZDHHC21 (265 aa).

The Cytoplasmic segment spans residues 1 to 16 (MGLRIHFVVDPHGWCC). A helical transmembrane segment spans residues 17-37 (MGLIVFVWLYNIVLIPKIVLF). Residues 38 to 44 (PHYEEGH) are Extracellular-facing. Residues 45 to 65 (IPGILIIIFYGISIFCLVALV) form a helical membrane-spanning segment. Residues 66 to 133 (RASITDPGRL…NNCVGEDNHW (68 aa)) lie on the Cytoplasmic side of the membrane. A DHHC domain is found at 90 to 140 (ELCNKCNLMRPKRSHHCSRCGHCVRRMDHHCPWINNCVGEDNHWLFLQLCF). Residue C120 is the S-palmitoyl cysteine intermediate of the active site. The helical transmembrane segment at 134–154 (LFLQLCFYTELLTCYALMFSF) threads the bilayer. At 155–185 (CHYYYFLPLKKRNLDLFVFRHELAIMRLAAF) the chain is on the extracellular side. The helical transmembrane segment at 186–206 (MGITMLVGITGLFYTQLIGII) threads the bilayer. Over 207–265 (TDTTSIEKMSNCCEDISRPRKPWQQTFSEVFGTRWKILWFIPFRQRQPLRVPYHFANHV) the chain is Cytoplasmic.

This sequence belongs to the DHHC palmitoyltransferase family. Widely expressed.

The protein localises to the golgi apparatus membrane. It localises to the golgi apparatus. Its subcellular location is the cis-Golgi network membrane. It is found in the cell membrane. It carries out the reaction L-cysteinyl-[protein] + hexadecanoyl-CoA = S-hexadecanoyl-L-cysteinyl-[protein] + CoA. Palmitoyltransferase that catalyzes the addition of palmitate onto various protein substrates. Palmitoylates sex steroid hormone receptors, including ESR1, PGR and AR, thereby regulating their targeting to the plasma membrane. This affects rapid intracellular signaling by sex hormones via ERK and AKT kinases and the generation of cAMP, but does not affect that mediated by their nuclear receptor. Palmitoylates FYN, regulates its localization in hair follicles and plays a key role in epidermal homeostasis and hair follicle differentiation. Through the palmitoylation of PLCB1 and the regulation of PLCB1 downstream signaling may indirectly regulate the function of the endothelial barrier and the adhesion of leukocytes to the endothelium. Also has a palmitoyltransferase activity toward ADRA1D, positively regulating its activity and expression and may thereby play a role in vascular contraction. May also palmitoylate eNOS and LCK. This Homo sapiens (Human) protein is Palmitoyltransferase ZDHHC21.